Here is a 715-residue protein sequence, read N- to C-terminus: Interferon-induced GTP-binding protein Mx2 (715 aa).

The region spanning 115–387 (DLALPAIAVI…LIMHIQKSLP (273 aa)) is the Dynamin-type G domain. The interval 125 to 132 (GDQSSGKS) is G1 motif. 125–132 (GDQSSGKS) contacts GTP. Positions 150 to 152 (VTR) are G2 motif. A G3 motif region spans residues 225–228 (DLPG). GTP is bound by residues 225-229 (DLPGI) and 294-297 (TKPD). The G4 motif stretch occupies residues 294-297 (TKPD). The G5 motif stretch occupies residues 326 to 329 (KCRG). Positions 623-714 (FTEIGIHLNA…ALCQFSSKEI (92 aa)) constitute a GED domain.

Belongs to the TRAFAC class dynamin-like GTPase superfamily. Dynamin/Fzo/YdjA family.

The protein resides in the cytoplasm. The protein localises to the nucleus. It localises to the nuclear pore complex. Its function is as follows. Interferon-induced dynamin-like GTPase with potent antiviral activity against human immunodeficiency virus type 1 (HIV-1). Acts by targeting the viral capsid and affects the nuclear uptake and/or stability of the HIV-1 replication complex and the subsequent chromosomal integration of the proviral DNA. Exhibits antiviral activity also against simian immunodeficiency virus (SIV-mnd). May play a role in regulating nucleocytoplasmic transport and cell-cycle progression. In Homo sapiens (Human), this protein is Interferon-induced GTP-binding protein Mx2 (MX2).